Consider the following 108-residue polypeptide: Tetrahydromethanopterin S-methyltransferase subunit B (108 aa).

Residues 80–100 form a helical membrane-spanning segment; it reads AFYGIVVGLAFSGLLALIIFI.

It belongs to the MtrB family. The complex is composed of 8 subunits; MtrA, MtrB, MtrC, MtrD, MtrE, MtrF, MtrG and MtrH.

The protein resides in the cell membrane. The catalysed reaction is 5-methyl-5,6,7,8-tetrahydromethanopterin + coenzyme M + 2 Na(+)(in) = 5,6,7,8-tetrahydromethanopterin + methyl-coenzyme M + 2 Na(+)(out). It functions in the pathway one-carbon metabolism; methanogenesis from CO(2); methyl-coenzyme M from 5,10-methylene-5,6,7,8-tetrahydromethanopterin: step 2/2. Functionally, part of a complex that catalyzes the formation of methyl-coenzyme M and tetrahydromethanopterin from coenzyme M and methyl-tetrahydromethanopterin. This is an energy-conserving, sodium-ion translocating step. The protein is Tetrahydromethanopterin S-methyltransferase subunit B of Methanosarcina acetivorans (strain ATCC 35395 / DSM 2834 / JCM 12185 / C2A).